A 650-amino-acid polypeptide reads, in one-letter code: L-aspartate N-monooxygenase (nitrosuccinate-forming) (650 aa).

It belongs to the nitrosuccinic acid synthase family. It depends on FAD as a cofactor.

It catalyses the reaction L-aspartate + 3 NADPH + 3 O2 + 2 H(+) = 2-nitrobutanedioate + 3 NADP(+) + 4 H2O. Functionally, involved in the biosynthesis of desferrioxamine derivatives which have iron-binding properties and may act as siderophores. Catalyzes the iterative oxidation of L-aspartic acid to nitrosuccinic acid (2-nitrobutanedioate) via N-hydroxyaspartic acid and nitrososuccinic acid. In Streptomyces davaonensis (strain DSM 101723 / JCM 4913 / KCC S-0913 / 768), this protein is L-aspartate N-monooxygenase (nitrosuccinate-forming).